The primary structure comprises 241 residues: Beta-casein (241 aa).

Residues Met1–Ala15 form the signal peptide. Positions Leu21–Thr45 are disordered. Ser24 carries the post-translational modification Phosphoserine; in form 4-P, form 5-P, form 6-P and form 7-P. Ser25 is modified (phosphoserine; in form 7-P). Residue Thr27 is modified to Phosphothreonine; in form 6-P and form 7-P. 2 positions are modified to phosphoserine: Ser30 and Ser32. A Phosphoserine; in form 5-P, form 6-P and form 7-P modification is found at Ser33. Ser38, Ser39, and Ser40 each carry phosphoserine; in form 4-P, form 5-P, form 6-P and form 7-P. Asn150 is modified (deamidated asparagine).

It belongs to the beta-casein family. Post-translationally, there are at least five different forms found in milk, with varying degrees of phosphorylation. These include form 3-P which is phosphorylated at three sites that have not been determined, this form is present in very low amounts, form 4-P which is phosphorylated at four sites, form 5-P which is phosphorylated at five sites, form 6-P which is phosphorylated at six sites, and form 7-P which is phosphorylated at seven sites. In terms of processing, spontaneous deamidation of Asn-150 produces aspartate or isoaspartate. Mammary gland specific. Secreted in milk.

The protein localises to the secreted. Its function is as follows. Important role in determination of the surface properties of the casein micelles. The sequence is that of Beta-casein from Equus caballus (Horse).